A 246-amino-acid polypeptide reads, in one-letter code: Sec-independent protein translocase protein TatB (246 aa).

A helical transmembrane segment spans residues 1–21 (MFDIGWSELLVIAVVLIVVVG). Disordered regions lie at residues 94–122 (SDLQKATSPSDGLSSTAAPATSEPVAPLV), 179–204 (SRSKAVATPETTVATNASEPASPKPT), and 225–246 (VADAKPAKAARTKAAKPKKDEA). Composition is skewed to polar residues over residues 97–112 (QKATSPSDGLSSTAAP) and 187–197 (PETTVATNASE).

The protein belongs to the TatB family. In terms of assembly, the Tat system comprises two distinct complexes: a TatABC complex, containing multiple copies of TatA, TatB and TatC subunits, and a separate TatA complex, containing only TatA subunits. Substrates initially bind to the TatABC complex, which probably triggers association of the separate TatA complex to form the active translocon.

The protein localises to the cell inner membrane. Its function is as follows. Part of the twin-arginine translocation (Tat) system that transports large folded proteins containing a characteristic twin-arginine motif in their signal peptide across membranes. Together with TatC, TatB is part of a receptor directly interacting with Tat signal peptides. TatB may form an oligomeric binding site that transiently accommodates folded Tat precursor proteins before their translocation. This Agrobacterium fabrum (strain C58 / ATCC 33970) (Agrobacterium tumefaciens (strain C58)) protein is Sec-independent protein translocase protein TatB.